A 528-amino-acid polypeptide reads, in one-letter code: Extracellular serine/threonine protein CG31145 (528 aa).

Residues 1–12 (MAVLRTMKLKER) are Cytoplasmic-facing. The propeptide occupies 1 to 76 (MAVLRTMKLK…LHEFKRKFLQ (76 aa)). The chain crosses the membrane as a helical span at residues 13 to 33 (LVISLGATLVLLTLLLIVDVQ). Residues 34 to 528 (MDFGVANRHL…VDGSETDVSS (495 aa)) are Lumenal-facing. The interval 77 to 130 (KSNASGSKEASTQAGASQSGGATSGQDAAAGASGGAAGPGTSRSTSTRKPTPHD) is disordered. Residue asparagine 79 is glycosylated (N-linked (GlcNAc...) asparagine). The segment covering 86-107 (ASTQAGASQSGGATSGQDAAAG) has biased composition (low complexity). N-linked (GlcNAc...) asparagine glycosylation occurs at asparagine 173. Residues glutamine 220, lysine 236, and glutamate 257 each coordinate ATP. Residue glutamate 257 coordinates Mn(2+). N-linked (GlcNAc...) asparagine glycosylation occurs at asparagine 286. Disulfide bonds link cysteine 312-cysteine 328 and cysteine 317-cysteine 321. Residue 339–342 (AAFL) coordinates ATP. Disulfide bonds link cysteine 376–cysteine 450 and cysteine 451–cysteine 510. Residue aspartate 408 is part of the active site. Glutamate 413 serves as a coordination point for ATP. N-linked (GlcNAc...) asparagine glycosylation occurs at asparagine 420. An ATP-binding site is contributed by aspartate 428. Aspartate 428 serves as a coordination point for Mn(2+).

This sequence belongs to the FAM20 family. It depends on Mn(2+) as a cofactor. In embryos, prominently expressed in midline glia, salivary gland, intestine and dorsal vessel (heart). Not associated with biomineralization.

Its subcellular location is the golgi apparatus membrane. It is found in the secreted. The catalysed reaction is L-seryl-[protein] + ATP = O-phospho-L-seryl-[protein] + ADP + H(+). The enzyme catalyses L-threonyl-[protein] + ATP = O-phospho-L-threonyl-[protein] + ADP + H(+). Its function is as follows. Golgi serine/threonine protein kinase that phosphorylates secretory pathway proteins within Ser-x-Glu/pSer motifs. The polypeptide is Extracellular serine/threonine protein CG31145 (Drosophila melanogaster (Fruit fly)).